Reading from the N-terminus, the 90-residue chain is U7-theraphotoxin-Hhn1b (90 aa).

The signal sequence occupies residues 1-19 (MKTAIFTVVLALAVFAVLS). Positions 20 to 50 (FGWEANEKALSEEFTELIHEKEAASETEARE) are excised as a propeptide. 3 disulfide bridges follow: Cys-51–Cys-65, Cys-58–Cys-70, and Cys-64–Cys-81.

It belongs to the neurotoxin 10 (Hwtx-1) family. 13 (Hntx-13) subfamily. In terms of tissue distribution, expressed by the venom gland.

Its subcellular location is the secreted. Ion channel inhibitor. The protein is U7-theraphotoxin-Hhn1b of Cyriopagopus hainanus (Chinese bird spider).